The sequence spans 434 residues: Enolase (434 aa).

Positions 158 and 167 each coordinate substrate. The Proton donor role is filled by Glu-210. Residues Asp-245, Glu-294, and Asp-319 each contribute to the Mg(2+) site. Residues Glu-294 and Asp-319 each contribute to the substrate site. Residue Lys-344 is the Proton acceptor of the active site. Substrate-binding positions include 371–374 and Lys-395; that span reads SHRS.

This sequence belongs to the enolase family. In terms of assembly, homodimer. Mg(2+) serves as cofactor.

The protein localises to the cytoplasm. It catalyses the reaction (2R)-2-phosphoglycerate = phosphoenolpyruvate + H2O. It participates in carbohydrate degradation; glycolysis; pyruvate from D-glyceraldehyde 3-phosphate: step 4/5. The protein is Enolase of Caenorhabditis elegans.